Consider the following 981-residue polypeptide: uncharacterized protein (981 aa).

5 disordered regions span residues 65–133 (NIDN…SNNS), 149–463 (SSNS…NKIE), 491–580 (SNNI…DSPL), 592–834 (EQTN…LNQV), and 861–891 (VQND…NDGN). The segment covering 75 to 88 (SSDDDDDDDDDDDY) has biased composition (acidic residues). 3 stretches are compositionally biased toward low complexity: residues 89–133 (NNNN…SNNS), 149–158 (SSNSINNNDN), and 170–181 (SAKTTSSLTSSK). The span at 182–195 (RSLDSRNRNRDRSY) shows a compositional bias: basic and acidic residues. The span at 196–206 (TRSRSRSRSRS) shows a compositional bias: basic residues. Over residues 207–227 (YSRGFSSLSRSRSRSRSISSR) the composition is skewed to low complexity. Residues 228-269 (SRSRSRSRRSRSRSSRSRSRSRSKSKSKSRRSRSRSRSRRSR) show a composition bias toward basic residues. Positions 270 to 292 (SRSDSRSRSDSRGRSRSRSDSRK) are enriched in basic and acidic residues. Residues 314–358 (SSKRHQNSRKRNRSYSRSRTRSWSRSRTRSRSRRRYGGRTFRSPR) show a composition bias toward basic residues. Residues 359 to 452 (RSRDDSRDRG…SQSPHNEKNK (94 aa)) are compositionally biased toward basic and acidic residues. Over residues 491–553 (SNNINNNNIK…SHNNTNGNVN (63 aa)) the composition is skewed to low complexity. Polar residues-rich tracts occupy residues 554-576 (GVSK…STDL) and 605-622 (ESNN…SSTE). Residues 623–634 (NENKNRENEKNN) show a composition bias toward basic and acidic residues. Composition is skewed to low complexity over residues 635–820 (SENS…NNNS) and 867–891 (SSPI…NDGN).

This is an uncharacterized protein from Dictyostelium discoideum (Social amoeba).